Reading from the N-terminus, the 266-residue chain is MSSVFGKPRAGSGPHSVPLEVNLAILGRRGAGKSALTVKFLTKRFISEYDPNLEDTYSSEETVDHQPVHLRVMDTADLDTPRNCERYLNWAHAFLVVYSVDSRASFEGSSSYLELLALHAKETQRGYPALLLGNKLDMAQYRQVTKAEGAALAGRFGCLFFEVSACLDFEHVQHVFHEAVREVRRELDKSPLARPLFISEEKTLSHQTPLTARHGLASCTFNTLSTASLKEMPTVAQAKLVTVKSSRAQSKRKAPTLTLLKGFKIF.

GTP-binding positions include 27-34, 74-78, and 134-137; these read GRRGAGKS, DTADL, and NKLD.

Belongs to the small GTPase superfamily. Ras family.

The catalysed reaction is GTP + H2O = GDP + phosphate + H(+). In Mus musculus (Mouse), this protein is Ras-like protein family member 12 (Rasl12).